Consider the following 358-residue polypeptide: Photosystem II protein D1 2 (358 aa).

A run of 3 helical transmembrane segments spans residues 28–45 (YVGWFGVLMIPCLLAATI), 117–132 (HFLIGISAYMGRQWEL), and 141–155 (WICVAYAAPLSAAMV). Chlorophyll a is bound at residue His117. Residue Tyr125 coordinates pheophytin a. The [CaMn4O5] cluster site is built by Asp169 and Glu188. A helical membrane pass occupies residues 196–217 (FHMLGVAGVFGGSLFSAMHGSL). Residue His197 coordinates chlorophyll a. A quinone contacts are provided by residues His214 and 263–264 (SF). His214 provides a ligand contact to Fe cation. Fe cation is bound at residue His271. The helical transmembrane segment at 273–287 (FLAAWPVVGIWFTSM) threads the bilayer. His331, Glu332, Asp341, and Ala343 together coordinate [CaMn4O5] cluster. Positions 344–358 (TTESAPVALQAPAVG) are excised as a propeptide.

Belongs to the reaction center PufL/M/PsbA/D family. As to quaternary structure, PSII is composed of 1 copy each of membrane proteins PsbA, PsbB, PsbC, PsbD, PsbE, PsbF, PsbH, PsbI, PsbJ, PsbK, PsbL, PsbM, PsbT, PsbX, PsbY, PsbZ, Psb30/Ycf12, peripheral proteins PsbO, CyanoQ (PsbQ), PsbU, PsbV and a large number of cofactors. It forms dimeric complexes. The cofactor is The D1/D2 heterodimer binds P680, chlorophylls that are the primary electron donor of PSII, and subsequent electron acceptors. It shares a non-heme iron and each subunit binds pheophytin, quinone, additional chlorophylls, carotenoids and lipids. D1 provides most of the ligands for the Mn4-Ca-O5 cluster of the oxygen-evolving complex (OEC). There is also a Cl(-1) ion associated with D1 and D2, which is required for oxygen evolution. The PSII complex binds additional chlorophylls, carotenoids and specific lipids.. In terms of processing, tyr-160 forms a radical intermediate that is referred to as redox-active TyrZ, YZ or Y-Z. C-terminally processed by CtpA; processing is essential to allow assembly of the oxygen-evolving complex and thus photosynthetic growth.

The protein localises to the cellular thylakoid membrane. It catalyses the reaction 2 a plastoquinone + 4 hnu + 2 H2O = 2 a plastoquinol + O2. In terms of biological role, photosystem II (PSII) is a light-driven water:plastoquinone oxidoreductase that uses light energy to abstract electrons from H(2)O, generating O(2) and a proton gradient subsequently used for ATP formation. It consists of a core antenna complex that captures photons, and an electron transfer chain that converts photonic excitation into a charge separation. The D1/D2 (PsbA/PsbD) reaction center heterodimer binds P680, the primary electron donor of PSII as well as several subsequent electron acceptors. The protein is Photosystem II protein D1 2 of Synechococcus sp. (strain RCC307).